A 720-amino-acid polypeptide reads, in one-letter code: Engulfment and cell motility protein 2 (720 aa).

Residue Tyr48 is modified to Phosphotyrosine. Residues 310–484 form the ELMO domain; the sequence is QAQRDIIFEL…QVVREQITRA (175 aa). Ser503 bears the Phosphoserine mark. The 122-residue stretch at 553-674 folds into the PH domain; the sequence is SSFRKIGNRR…LLGKDMSSEL (122 aa). An SH3-binding motif is present at residues 700–707; it reads PEAPPPVP. Residue Tyr717 is modified to Phosphotyrosine.

In terms of assembly, interacts directly with the SH3-domain of DOCK1 via its SH3-binding site. Probably forms a heterotrimeric complex with DOCK1 and RAC1. Interacts with ARHGEF16, DOCK4 and EPHA2; mediates activation of RAC1 by EPHA2. Interacts with ADGRB3. Interacts with AUTS2; the interaction is direct.

The protein localises to the cytoplasm. Its subcellular location is the cytosol. The protein resides in the membrane. Its function is as follows. Involved in cytoskeletal rearrangements required for phagocytosis of apoptotic cells and cell motility. Acts in association with DOCK1 and CRK. Was initially proposed to be required in complex with DOCK1 to activate Rac Rho small GTPases. May enhance the guanine nucleotide exchange factor (GEF) activity of DOCK1. The polypeptide is Engulfment and cell motility protein 2 (ELMO2) (Bos taurus (Bovine)).